The sequence spans 3083 residues: MAAIMIGSISVPIIGSAQCATAPIGNRVNIVAPGHMAICKPQMRSHAYYKHASQKLSEQSSRGIEVLNSFFNNDPEDAFRLTRNGMSKVKKGPNGRIILRKPKARHVFERINLEKSEKEQKGKFFNGEYDTTVTSIKGVTTSKENDLGAFSLRSPFYKRTCKKEKRRITRENIVCVDDVNNLCERILKITRDKNIPVEIIGKRRNHHTLTFKKFKGSFVGKVSLAPERSQMKHVEMSYGQFDYILQAICRITSTKHVRDEDIKPGCSGWVFSTDHALTQKYSRLPYLVIRGRDDDGIVNALEPVLFYSDVEHYSFQNEVQFFNGWRKMFDKLKPHSDHTCKVDHNNEECGEMAAVLSQAIFPVLKLSCQVCREKLSRVSFEEFKDFLSRNFMTHESEWSTLRDGVHCDNVLKLIKGAVQTTQNLKLSSDIMKLVQNHTSTHMKQIQDINKALMKGSLVTQDELDLALKQLLEMTQWFKNHMHLTGEEALKTFRNKRSNKAMINPSLLCDNQLDKNGNFIWGERGYHSKRLFKNFFEEVIPSEGYTKYIVRNFPNGTRKLAIGSLIVPLNLDRARTALLGESIEKEPLTSACISQQNENYIHSCCCVTMDDGTPMYSELKSPTKRHLVIGASGDPKYIDLPASEAERMYIAKEGYCYLNIFLAMLVNVNENEAKDFTKMIRDVLIPMLGQWPSLMDVATAAYILGVFHPETRCAELPRILVDHATQTMHVIDSYGSLTVGYHVLKAGTVNHLIQFASNDLQSEMKHYRVGGTPTQRIRLEEQLIKGIFKPKIMMQLLHDDPYILLLGMISPTILVHMYRMRHFERGIEIWIKRDHEIGKIFVILEQLTRKVALAEILVDQLDLISEASPHLLEIMNGCQDNQRAYAPALDLLTIQVEREFSNKELKTNGYPDLHQTLHDMREKMYAKQLHNSWQELSLLEKSCVTVRLKQFSIFTERNLTQRAKERKHASSLQFVHECFITTRVHAKSIRDAGVRKLNEALVGTCKFFFSCGFRIFARCYSDIIYFVNVCLVFSLVLQMSNTVRNMIAATREEKERAMANKADENERTLMHMYHIFCKKQDDAPIYNDFLEHVRSVRPDLEETLLYMAGGEVVTAQAKSAVQIQFEKIIAVLALLTMCFDAERSDAIFKILTKLKIVFGTVGETVRLQGLEDIENLEDDKRLTIDFDINTNEAQSSTTFDVHFEDWWNRQLQQNRTVPHYRTTGKFLEFTRSTAAYVANEIASSSEGEFLVRGAVGSGKSTSLPAHLAKKGKVLLLEPTRPLAENVSRQLAGDPFFQNVTLRMRGLSCFGSSNITVMTSGFAFHYYVNNPHQLMEFDFVIIDECHVTDSATIAFNCALKEYSFAGKLIKVSATPPGRECDFDTQFAVKVKTEDHLSFNAFVGAQKTGSNADMVQHGNNILVYVASYNEVDMLSKLLTERQFSVTKVDGRTMQLGKTTIETHGTSQKPHFIVATNIIENGVTLDVECVVDFGLKVVAELDSEKRCVRYSKKPVSYGERIQRLGRVGRSKPGTALRIGHTEKGIENIPEFIATEAAALSFAYGLSVTTHGVSTNNLGKCTVKQMKCALNFELTPFFTTHLIRHDGSMHPLIHEELKQFKLRDSEMVLNKVALPHQFVSQWMDQSEYERIGVHIQCHESTRIPFYTNGIPDKVYERIWKCIQENKNDALFGKLSSAFPSKVSYTLSTDPAALPRTIAIIDHLLAEEMMKRNHFDMISSAVTGYSFSLAGIADSFRKRYMRDHTAHHIAILQQARAQLLEFNSKNVNINNLSDLEGIGVIKSVVLQSKQEVSSFLGLRGKWDGRKFANDVILAVMTLFGGGWFMWEYFTKKVNEPVRVESKKRRSQKLKFRDAYDRKVGREIFGDNDTIGRTFGEAYTKRGKVKGNNSTKGMGRKTRNFVHLYGVEPEIYSFIRFVDPLTGHTLDESTHTDISLVQEEFGNIREKFLENDLISRQSIINKPGIQAYFMGKGTEEALKVDLTPHVPLLLCRNTNAIAGYPERENELRQTGTPIKVSFKEVPEKNEHVELESKSIYKGVRDYNGISTIVCQLTNDSDGLKETMYGIGYGPIIITNGHLFRKNNGTLLVRSWHGEFTVKNTTTLKVHFIEGKDVVLVRMPKDFPPFRSNASFRAPKREERACLVGTNFQEKSLRSTVSESSMTIPEGTGSYWIHWISTNEGDCGLPMVSTTDGKIIGIHGLASTVSSKNYFVPFTDDLLTTHLSKLDDLTWTQHWLWQPSKIAWGSLNLVDEQPGPEFRISNLVKDLLTSGVETQSKRERWVYESCEGNLRAVGSAQSALVTKHVVKGKCPFFEEYLQTHAEANTYFRPLMGEYQPSKLNKEAFKKDFFKYNKPVVVNQLDHDKFLGAVNGVIRMMCDFEFNECRFITDPEEIYDSLNMKAAIGAQYRGKKKEYFEGLDNFDRERLLFQSCERLFNGHKGLWNGSLKAELRPLEKVQANKTRTFTAAPIDTLLGAKVCVDDFNNEFYSKNLKCPWTVGMTKFYGGWDKLMRELPDGWLYCHADGSQFDSSLTPALLNAVLIIRSFYMEDWWVGQEMLENLYAEIVYTPILAPDGTIFKKFRGNNSGQPSTVVDNTLMVVISIYYACMKFGWSYEEIENKLVFFANGDDLILAVKDEDSGLLDNMSASFSELGLNYDFSERTHKREDLWFMSHQAMLVDGMYIPKLEKERIVSILEWDRSKEIMHRTEAICAAMIEAWGHTDLLREIRKFYLWFVEKEEVRELATLGKAPYIAETALRKLYTDKGAETGELARYLQALHQDIFFEQGDTVMLQSDTQTREAGAGASKKDKDEDKDKKKDVASSSASEKAVATATKDKDVNAGSHGKIVPRLSKITKKMSLPRVKGSVILDIDHLLEYKPDQIELYNTRASHQQFASWFNQVKAEYDLNEQQMGVVMNGFMVWCIENGTSPDINGVWVMMDGNEQVEYPLKPIVENAKPTLRQIMHHFSDAAEAYIEMRNAEAPYMPRYGLLRNLRDRSLARYAFDFYEVNSKTPDRAREAVAQMKAAALSNVSSRLFGLDGNVATTSEDTERHTARDVNRNMHTLLGVNTMQ.

In terms of domain architecture, Peptidase S30 spans I173–Y313. Residue S267 is the For P1 proteinase activity of the active site. The Involved in interaction with stylet and aphid transmission signature appears at K365–C368. Residues P621–K623 carry the Involved in virions binding and aphid transmission motif. In terms of domain architecture, Peptidase C6 spans M647–G769. Catalysis depends on for helper component proteinase activity residues C655 and H728. Positions E1239–E1391 constitute a Helicase ATP-binding domain. G1252–S1259 is an ATP binding site. The short motif at D1341–H1344 is the DECH box element. In terms of domain architecture, Helicase C-terminal spans D1410–S1569. Positions K1894–S1903 match the Nuclear localization signal motif. Y1918 is modified (O-(5'-phospho-RNA)-tyrosine). Positions S2045–D2263 constitute a Peptidase C4 domain. Active-site for nuclear inclusion protein A activity residues include H2090, D2125, and C2195. One can recognise a RdRp catalytic domain in the interval W2529 to L2653. The tract at residues Q2808 to H2855 is disordered. Residues S2817 to V2831 are compositionally biased toward basic and acidic residues. Positions A2832–A2844 are enriched in low complexity. T3065 is subject to Phosphothreonine.

It belongs to the potyviridae genome polyprotein family. As to quaternary structure, interacts with host eIF4E protein (via cap-binding region); this interaction mediates the translation of the VPg-viral RNA conjugates. Part of a complex that comprises VPg, RNA, host EIF4E and EIF4G; this interaction mediates the translation of the VPg-viral RNA conjugates. In terms of processing, VPg is uridylylated by the polymerase and is covalently attached to the 5'-end of the genomic RNA. This uridylylated form acts as a nucleotide-peptide primer for the polymerase. Post-translationally, potyviral RNA is expressed as two polyproteins which undergo post-translational proteolytic processing. Genome polyprotein is processed by NIa-pro, P1 and HC-pro proteinases resulting in the production of at least ten individual proteins. P3N-PIPO polyprotein is cleaved by P1 and HC-pro proteinases resulting in the production of three individual proteins. The P1 proteinase and the HC-pro cleave only their respective C-termini autocatalytically. 6K1 is essential for proper proteolytic separation of P3 from CI.

The protein resides in the host cytoplasmic vesicle. Its subcellular location is the host nucleus. It localises to the virion. The catalysed reaction is RNA(n) + a ribonucleoside 5'-triphosphate = RNA(n+1) + diphosphate. The enzyme catalyses Hydrolyzes glutaminyl bonds, and activity is further restricted by preferences for the amino acids in P6 - P1' that vary with the species of potyvirus, e.g. Glu-Xaa-Xaa-Tyr-Xaa-Gln-|-(Ser or Gly) for the enzyme from tobacco etch virus. The natural substrate is the viral polyprotein, but other proteins and oligopeptides containing the appropriate consensus sequence are also cleaved.. It catalyses the reaction Hydrolyzes a Gly-|-Gly bond at its own C-terminus, commonly in the sequence -Tyr-Xaa-Val-Gly-|-Gly, in the processing of the potyviral polyprotein.. Its function is as follows. Required for aphid transmission and also has proteolytic activity. Only cleaves a Gly-Gly dipeptide at its own C-terminus. Interacts with virions and aphid stylets. Acts as a suppressor of RNA-mediated gene silencing, also known as post-transcriptional gene silencing (PTGS), a mechanism of plant viral defense that limits the accumulation of viral RNAs. May have RNA-binding activity. In terms of biological role, has helicase activity. It may be involved in replication. Indispensable for virus replication. Reduces the abundance of host transcripts related to jasmonic acid biosynthesis therefore altering the host defenses. In order to increase its own stability, decreases host protein degradation pathways. Functionally, indispensable for virus replication. Its function is as follows. Mediates the cap-independent, EIF4E-dependent translation of viral genomic RNAs. Binds to the cap-binding site of host EIF4E and thus interferes with the host EIF4E-dependent mRNA export and translation. VPg-RNA directly binds EIF4E and is a template for transcription. Also forms trimeric complexes with EIF4E-EIF4G, which are templates for translation. In terms of biological role, has RNA-binding and proteolytic activities. An RNA-dependent RNA polymerase that plays an essential role in the virus replication. Functionally, involved in aphid transmission, cell-to-cell and systemis movement, encapsidation of the viral RNA and in the regulation of viral RNA amplification. This is Genome polyprotein from Zucchini yellow mosaic virus (strain Singapore) (ZYMV).